Reading from the N-terminus, the 805-residue chain is Phenylalanine--tRNA ligase beta subunit (805 aa).

The region spanning 39-148 (APPFTGVVVT…AALRPGTDIR (110 aa)) is the tRNA-binding domain. The region spanning 399 to 474 (PVREPVRMRL…RVYGFERIPD (76 aa)) is the B5 domain. Mg(2+) contacts are provided by Asp452, Asp458, Glu461, and Glu462. Positions 703-804 (SRQPVVVRDL…LVAAHNARQR (102 aa)) constitute an FDX-ACB domain.

The protein belongs to the phenylalanyl-tRNA synthetase beta subunit family. Type 1 subfamily. In terms of assembly, tetramer of two alpha and two beta subunits. Requires Mg(2+) as cofactor.

The protein resides in the cytoplasm. The enzyme catalyses tRNA(Phe) + L-phenylalanine + ATP = L-phenylalanyl-tRNA(Phe) + AMP + diphosphate + H(+). This is Phenylalanine--tRNA ligase beta subunit from Bordetella pertussis (strain Tohama I / ATCC BAA-589 / NCTC 13251).